Reading from the N-terminus, the 262-residue chain is MSTHANHPFHLVDYSPWPLTGAIGAMTTVTGLVQWFHQYDNTLFLLGNIITMLTMYQWWRDISREGTFQGLHTIPVTLGLRWGMILFIISEVFFFISFFWAFFHSSLSPTIELGMVWPPIGIEPFNPFQIPLLNTAILLASGVTVTWAHHSLMENNHTQTIQSLFFTVLLGIYFSILQAYEYIEAPFTIADNVYGSTFFVATGFHGLHVLIGTSFLLICLFRHMNCHFSSSHHFGFEAAAWYWHFVDVVWLFLYISIYWWGN.

Transmembrane regions (helical) follow at residues 16 to 36 (PWPL…VQWF), 42 to 59 (TLFL…YQWW), 83 to 103 (GMIL…WAFF), 128 to 148 (FQIP…VTWA), 163 to 183 (SLFF…YEYI), 198 to 218 (FFVA…FLLI), and 240 to 260 (AWYW…IYWW).

This sequence belongs to the cytochrome c oxidase subunit 3 family. Component of the cytochrome c oxidase (complex IV, CIV), a multisubunit enzyme composed of a catalytic core of 3 subunits and several supernumerary subunits. The complex exists as a monomer or a dimer and forms supercomplexes (SCs) in the inner mitochondrial membrane with ubiquinol-cytochrome c oxidoreductase (cytochrome b-c1 complex, complex III, CIII).

Its subcellular location is the mitochondrion inner membrane. The catalysed reaction is 4 Fe(II)-[cytochrome c] + O2 + 8 H(+)(in) = 4 Fe(III)-[cytochrome c] + 2 H2O + 4 H(+)(out). In terms of biological role, component of the cytochrome c oxidase, the last enzyme in the mitochondrial electron transport chain which drives oxidative phosphorylation. The respiratory chain contains 3 multisubunit complexes succinate dehydrogenase (complex II, CII), ubiquinol-cytochrome c oxidoreductase (cytochrome b-c1 complex, complex III, CIII) and cytochrome c oxidase (complex IV, CIV), that cooperate to transfer electrons derived from NADH and succinate to molecular oxygen, creating an electrochemical gradient over the inner membrane that drives transmembrane transport and the ATP synthase. Cytochrome c oxidase is the component of the respiratory chain that catalyzes the reduction of oxygen to water. Electrons originating from reduced cytochrome c in the intermembrane space (IMS) are transferred via the dinuclear copper A center (CU(A)) of subunit 2 and heme A of subunit 1 to the active site in subunit 1, a binuclear center (BNC) formed by heme A3 and copper B (CU(B)). The BNC reduces molecular oxygen to 2 water molecules using 4 electrons from cytochrome c in the IMS and 4 protons from the mitochondrial matrix. The polypeptide is Cytochrome c oxidase subunit 3 (Aedes aegypti (Yellowfever mosquito)).